Here is a 211-residue protein sequence, read N- to C-terminus: Peptide methionine sulfoxide reductase MsrA (211 aa).

Cys52 is a catalytic residue.

This sequence belongs to the MsrA Met sulfoxide reductase family.

It carries out the reaction L-methionyl-[protein] + [thioredoxin]-disulfide + H2O = L-methionyl-(S)-S-oxide-[protein] + [thioredoxin]-dithiol. The catalysed reaction is [thioredoxin]-disulfide + L-methionine + H2O = L-methionine (S)-S-oxide + [thioredoxin]-dithiol. Functionally, has an important function as a repair enzyme for proteins that have been inactivated by oxidation. Catalyzes the reversible oxidation-reduction of methionine sulfoxide in proteins to methionine. This chain is Peptide methionine sulfoxide reductase MsrA, found in Klebsiella pneumoniae (strain 342).